The primary structure comprises 152 residues: Protein CHLOROPLAST VESICULATION (152 aa).

The N-terminal 22 residues, 1–22 (MAGRISCCLNLPPLDSNSAQSL), are a transit peptide targeting the chloroplast. A helical membrane pass occupies residues 48–65 (CSFVLGVAATVVIGGIQI). Positions 92–152 (RWSDKRTCPP…RVNRGGCFSV (61 aa)) are important for chloroplast destabilization and the formation of CV-containing vesicles.

As to quaternary structure, interacts with the photosystem II subunit PsbO1 via its C-terminal region in the chloroplast thylakoid membrane and in CV-containing vesicles (CCVs). As to expression, mostly expressed in senescent and mature leaves but not in young leaves.

The protein localises to the plastid. It is found in the chloroplast membrane. It localises to the chloroplast thylakoid membrane. Its subcellular location is the chloroplast envelope. The protein resides in the vacuole. The protein localises to the vesicle. In terms of biological role, triggers stress-induced chloroplast degradation, independently of autophagy and senescence-associated vacuoles. After targeting to the chloroplast, triggers its destabilization and subsequent disassembly, inducing the formation of CV-containing vesicles (CCVs) carrying stromal proteins, envelope membrane proteins, and thylakoid membrane proteins which are released from the chloroplasts and mobilized to the vacuole for proteolysis. This chain is Protein CHLOROPLAST VESICULATION, found in Arabidopsis thaliana (Mouse-ear cress).